Consider the following 146-residue polypeptide: Large ribosomal subunit protein uL11 (146 aa).

It belongs to the universal ribosomal protein uL11 family. As to quaternary structure, part of the ribosomal stalk of the 50S ribosomal subunit. Interacts with L10 and the large rRNA to form the base of the stalk. L10 forms an elongated spine to which L12 dimers bind in a sequential fashion forming a multimeric L10(L12)X complex. One or more lysine residues are methylated.

Forms part of the ribosomal stalk which helps the ribosome interact with GTP-bound translation factors. The chain is Large ribosomal subunit protein uL11 from Salinibacter ruber (strain DSM 13855 / M31).